The sequence spans 91 residues: Small ribosomal subunit protein uS19 (91 aa).

This sequence belongs to the universal ribosomal protein uS19 family.

In terms of biological role, protein S19 forms a complex with S13 that binds strongly to the 16S ribosomal RNA. The protein is Small ribosomal subunit protein uS19 of Synechococcus sp. (strain CC9902).